Here is a 66-residue protein sequence, read N- to C-terminus: Large ribosomal subunit protein bL35 (66 aa).

This sequence belongs to the bacterial ribosomal protein bL35 family.

This is Large ribosomal subunit protein bL35 from Ruegeria sp. (strain TM1040) (Silicibacter sp.).